Reading from the N-terminus, the 243-residue chain is VQ motif-containing protein 33 (243 aa).

Residues 1-16 (MEVSTSSMSSKPEQMQ) show a composition bias toward polar residues. The tract at residues 1 to 49 (MEVSTSSMSSKPEQMQNPPPMISSPRFQPQIISPHHHDQHQHLSNPYPT) is disordered. A VQ motif is present at residues 59 to 68 (FKQVVQMLTG). Disordered regions lie at residues 69-98 (SSTD…SIPP) and 138-162 (FTGG…SENI). A phosphoserine mark is found at serine 83 and serine 95. The span at 84-98 (PVNNNNKGSSFSIPP) shows a compositional bias: polar residues. Threonine 139 is modified (phosphothreonine). 5 positions are modified to phosphoserine: serine 148, serine 152, serine 165, serine 167, and serine 178. A compositionally biased stretch (low complexity) spans 149 to 162 (PRFSPRNSSSSENI). Residues 180 to 243 (VTPLRSNDDP…FPVASPARNS (64 aa)) are disordered. Threonine 181 carries the post-translational modification Phosphothreonine. The segment covering 191–201 (NKSSPLSLGNS) has biased composition (polar residues). A phosphoserine mark is found at serine 218 and serine 221. Threonine 222 is subject to Phosphothreonine. A Phosphoserine modification is found at serine 238.

Phosphorylated on serine and threonine residues by MPK6.

Its subcellular location is the nucleus. Its function is as follows. May modulate WRKY transcription factor activities. The chain is VQ motif-containing protein 33 from Arabidopsis thaliana (Mouse-ear cress).